The chain runs to 324 residues: Serpentine receptor class delta-30 (324 aa).

The next 7 membrane-spanning stretches (helical) occupy residues I5–A25, A38–M58, A83–I103, V124–F144, I176–I196, F227–T247, and A258–V278. A disordered region spans residues K290–H324. A compositionally biased stretch (polar residues) spans R303–H324.

Belongs to the nematode receptor-like protein srd family.

The protein resides in the membrane. The protein is Serpentine receptor class delta-30 (srd-30) of Caenorhabditis elegans.